The primary structure comprises 275 residues: Large ribosomal subunit protein uL2 (275 aa).

Residues 219–263 (EVRGAAMNPRDHPHGGGEGRAPRGMPTPKTKWGKPARGVKTRHNP) are disordered. The span at 227-239 (PRDHPHGGGEGRA) shows a compositional bias: basic and acidic residues. The segment covering 249-262 (KWGKPARGVKTRHN) has biased composition (basic residues).

Belongs to the universal ribosomal protein uL2 family. Part of the 50S ribosomal subunit. Forms a bridge to the 30S subunit in the 70S ribosome.

Its function is as follows. One of the primary rRNA binding proteins. Required for association of the 30S and 50S subunits to form the 70S ribosome, for tRNA binding and peptide bond formation. It has been suggested to have peptidyltransferase activity; this is somewhat controversial. Makes several contacts with the 16S rRNA in the 70S ribosome. This is Large ribosomal subunit protein uL2 from Roseiflexus castenholzii (strain DSM 13941 / HLO8).